The chain runs to 339 residues: Formyl peptide receptor-related sequence 6 (339 aa).

Topologically, residues 1–23 are extracellular; it reads MEANFSIPQNGSEVVFYDSTTSR. Residues Asn-4 and Asn-10 are each glycosylated (N-linked (GlcNAc...) asparagine). Residues 24–44 traverse the membrane as a helical segment; the sequence is VICIFLVVVLSITFLLGVIGN. The Cytoplasmic segment spans residues 45–62; the sequence is GLVIYVAGFRMTHTVTTI. The helical transmembrane segment at 63-85 threads the bilayer; that stretch reads CYLNLALSDFSYMASLPFQITSI. Over 86–99 the chain is Extracellular; the sequence is VMNGEWLFGWFLCK. An intrachain disulfide couples Cys-98 to Cys-178. The helical transmembrane segment at 100–120 threads the bilayer; sequence FVHMIINVNLFLSIFLITFIA. Over 121-144 the chain is Cytoplasmic; the sequence is MDRCICVLHPVWAQNHRTVNVATK. A helical membrane pass occupies residues 145 to 165; sequence VIFGAWILVLMLIFPHCIFVT. The Extracellular portion of the chain corresponds to 166–198; that stretch reads TVKDESGKVHCICNFESWAATPEEQVKVSMTVS. Residues 199–219 form a helical membrane-spanning segment; that stretch reads LISVTISFIIGFSIPMIFIVI. Topologically, residues 220–241 are cytoplasmic; it reads CYGLMAAKIGRRGFVNSSRPLR. A helical transmembrane segment spans residues 242–262; the sequence is VLTAVAISFFVCWFPFQLIFL. At 263-280 the chain is on the extracellular side; the sequence is LGNIGNKETQNNIDTWVN. Residues 281-301 form a helical membrane-spanning segment; that stretch reads TASTLASFNSCLNPILYVFLG. Residues 302–339 lie on the Cytoplasmic side of the membrane; the sequence is QQFRERLIYSLSASLERALREDSALNSDKTRNLSSQRL.

This sequence belongs to the G-protein coupled receptor 1 family. Expressed exclusively in vomeronasal tissue. Expressed in 1.2 % of a subset of sensory neurons located in the apical layer of the vomeronasal organ. Each neuron appears to express only one receptor gene. Expressed in brain, spleen, skeletal muscle and at high level in testis.

Its subcellular location is the membrane. Functionally, may have an olfactory function associated with the identification of pathogens or of pathogenic states. The polypeptide is Formyl peptide receptor-related sequence 6 (Fpr-rs6) (Mus musculus (Mouse)).